Consider the following 342-residue polypeptide: MNILFWGTPDYAVPTLMALHQAGHTIVGVVTQPDRRRGRGKTLVPSAVKAKAIKMGLRVFTPERIKQDETCQQQLAELQPDLSVVVAFGQILPKNVLNQPPLGCWNGHGSLLPRWRGAGPIQWSILEGDPETGVGVMAMEEGLDTGPVLIERNLPIGLLDNGHTLAERMSVLTAELMVEAMPLIESAGQGSEPERRARLKVMNQSDRSGDASYARMLTKQDHQIDWSASALNIHRKVMALYPNAVTLWNDKRLKLLHCEPLIDRLREELPAEVHPLIGRWPTGGHPPGTVLESVKGLGVVVSTSGCPILVRAAQLEGKGRSDGDSLIQQLNAAAEQQFGTFS.

110–113 is a binding site for (6S)-5,6,7,8-tetrahydrofolate; it reads SLLP.

This sequence belongs to the Fmt family.

It catalyses the reaction L-methionyl-tRNA(fMet) + (6R)-10-formyltetrahydrofolate = N-formyl-L-methionyl-tRNA(fMet) + (6S)-5,6,7,8-tetrahydrofolate + H(+). Functionally, attaches a formyl group to the free amino group of methionyl-tRNA(fMet). The formyl group appears to play a dual role in the initiator identity of N-formylmethionyl-tRNA by promoting its recognition by IF2 and preventing the misappropriation of this tRNA by the elongation apparatus. This Synechococcus sp. (strain CC9311) protein is Methionyl-tRNA formyltransferase.